Here is a 186-residue protein sequence, read N- to C-terminus: Ribosome-recycling factor (186 aa).

Belongs to the RRF family.

The protein resides in the cytoplasm. Its function is as follows. Responsible for the release of ribosomes from messenger RNA at the termination of protein biosynthesis. May increase the efficiency of translation by recycling ribosomes from one round of translation to another. This Endomicrobium trichonymphae protein is Ribosome-recycling factor.